The sequence spans 94 residues: Co-chaperonin GroES (94 aa).

It belongs to the GroES chaperonin family. Heptamer of 7 subunits arranged in a ring. Interacts with the chaperonin GroEL.

The protein resides in the cytoplasm. Together with the chaperonin GroEL, plays an essential role in assisting protein folding. The GroEL-GroES system forms a nano-cage that allows encapsulation of the non-native substrate proteins and provides a physical environment optimized to promote and accelerate protein folding. GroES binds to the apical surface of the GroEL ring, thereby capping the opening of the GroEL channel. The polypeptide is Co-chaperonin GroES (Ehrlichia chaffeensis).